The sequence spans 89 residues: Small ribosomal subunit protein uS15 (89 aa).

The protein belongs to the universal ribosomal protein uS15 family. As to quaternary structure, part of the 30S ribosomal subunit. Forms a bridge to the 50S subunit in the 70S ribosome, contacting the 23S rRNA.

In terms of biological role, one of the primary rRNA binding proteins, it binds directly to 16S rRNA where it helps nucleate assembly of the platform of the 30S subunit by binding and bridging several RNA helices of the 16S rRNA. Functionally, forms an intersubunit bridge (bridge B4) with the 23S rRNA of the 50S subunit in the ribosome. The polypeptide is Small ribosomal subunit protein uS15 (Syntrophomonas wolfei subsp. wolfei (strain DSM 2245B / Goettingen)).